The following is a 78-amino-acid chain: Large ribosomal subunit protein bL28 (78 aa).

The disordered stretch occupies residues 1–23; the sequence is MSRKCQITGKKANNAMAVSHSHR.

It belongs to the bacterial ribosomal protein bL28 family.

The chain is Large ribosomal subunit protein bL28 from Picosynechococcus sp. (strain ATCC 27264 / PCC 7002 / PR-6) (Agmenellum quadruplicatum).